The primary structure comprises 291 residues: MIQVAGVNFEDPIVIASGIVPPTKEYMQNVCEKYEPSAITSKTLTYSPLEPHRSPTFVKISDNCYLNAIGLGNPGIQILRDLGEIKCKLIISIGGSNVNEYIDAVSKINDIPVMIELNVSSPNRRGFGESNLTYVEEIVKNVKSIVKKPVFVKLGPWDNIVEIAGRALSAGADGLTLINTLKGMLIDVEDFKPILSYGTGGISGKCIHALAVRVIHDVFKEYEPEIIGVGGVFDWRDAIELISVGAKLVGLGTVLVEKGFDVIREIREGIGTYLEEKGLKVEEIRGIGVKR.

Residues S17 and 42-43 each bind FMN; that span reads KT. Substrate is bound by residues K42, 67 to 71, and N118; that span reads NAIGL. N118 is a binding site for FMN. The active-site Nucleophile is S121. K153 and I178 together coordinate FMN. Substrate is bound at residue 179–180; the sequence is NT. Residues G204, 230 to 231, and 252 to 253 contribute to the FMN site; these read GG and GT.

This sequence belongs to the dihydroorotate dehydrogenase family. Type 1 subfamily. Heterotetramer of 2 PyrK and 2 PyrD type B subunits. It depends on FMN as a cofactor.

The protein localises to the cytoplasm. The enzyme catalyses (S)-dihydroorotate + NAD(+) = orotate + NADH + H(+). Its pathway is pyrimidine metabolism; UMP biosynthesis via de novo pathway; orotate from (S)-dihydroorotate (NAD(+) route): step 1/1. Catalyzes the conversion of dihydroorotate to orotate with NAD(+) as electron acceptor. The chain is Dihydroorotate dehydrogenase B (NAD(+)), catalytic subunit (pyrD) from Sulfolobus acidocaldarius (strain ATCC 33909 / DSM 639 / JCM 8929 / NBRC 15157 / NCIMB 11770).